Reading from the N-terminus, the 409-residue chain is Adenosine receptor A2a (409 aa).

Over 1-4 (MSSS) the chain is Extracellular. Residues 5–29 (VYITVELVIAVLAILGNVLVCWAVW) traverse the membrane as a helical segment. The Cytoplasmic portion of the chain corresponds to 30-39 (INSNLQNVTN). A helical membrane pass occupies residues 40–63 (YFVVSLAAADIAVGVLAIPFAITI). Over 64 to 74 (STGFCAACHGC) the chain is Extracellular. Cystine bridges form between cysteine 68–cysteine 156, cysteine 71–cysteine 143, and cysteine 74–cysteine 163. Residues 75 to 97 (LFFACFVLVLTQSSIFSLLTITI) form a helical membrane-spanning segment. Residues 98-117 (DRYIAIRIPLRYNGLVTCTR) are Cytoplasmic-facing. Residues 118-140 (AKGIIAICWVLSFAIGLTPMLGW) form a helical membrane-spanning segment. Residues 141–170 (NNCSQPKGDKNHSESCDEGQVTCLFEDVVP) lie on the Extracellular side of the membrane. 2 N-linked (GlcNAc...) asparagine glycosylation sites follow: asparagine 142 and asparagine 151. Glutamate 166 lines the adenosine pocket. A helical membrane pass occupies residues 171-195 (MNYMVYYNFFAFVLVPLLLMLGIYL). The Cytoplasmic portion of the chain corresponds to 196–231 (RIFLAARRQLKQMESQPLPGERTRSTLQKEVHPAKS). The chain crosses the membrane as a helical span at residues 232–255 (LAIIVGLFALCCLPLNIINCFTFF). Asparagine 250 serves as a coordination point for adenosine. A disulfide bond links cysteine 256 and cysteine 259. Residues 256-263 (CPECDHAP) lie on the Extracellular side of the membrane. The helical transmembrane segment at 264–287 (PWLMYLTIILSHGNSVVNPLIYAY) threads the bilayer. Adenosine-binding residues include serine 274 and histidine 275. Topologically, residues 288 to 409 (RIREFRQTFR…PPAHGGAGVS (122 aa)) are cytoplasmic. Disordered stretches follow at residues 316–336 (TSAR…LRLN) and 369–409 (QRSH…AGVS).

It belongs to the G-protein coupled receptor 1 family. In terms of assembly, interacts (via cytoplasmic C-terminal domain) with USP4; the interaction is direct. May interact with DRD4. Interacts with NECAB2. Interacts (via cytoplasmic C-terminal domain) with GAS2L2; interaction enhances receptor-mediated adenylyl cyclase activity. Post-translationally, ubiquitinated. Deubiquitinated by USP4; leading to stabilization and expression at the cell surface.

The protein localises to the cell membrane. Receptor for adenosine. The activity of this receptor is mediated by G proteins which activate adenylyl cyclase. This Cavia porcellus (Guinea pig) protein is Adenosine receptor A2a (ADORA2A).